Reading from the N-terminus, the 609-residue chain is Proteasome-associated ATPase (609 aa).

The disordered stretch occupies residues 1–24; the sequence is MADSERSEAFGTPDDTPLSSNDAA. The stretch at 19 to 96 forms a coiled coil; sequence SSNDAAELEQ…LREEVDRLGQ (78 aa). 296–301 contacts ATP; sequence GCGKTL. The interval 608–609 is docks into pockets in the proteasome alpha-ring; that stretch reads YL.

The protein belongs to the AAA ATPase family. Homohexamer. Assembles into a hexameric ring structure that caps the 20S proteasome core. Strongly interacts with the prokaryotic ubiquitin-like protein Pup through a hydrophobic interface; the interacting region of ARC lies in its N-terminal coiled-coil domain. There is one Pup binding site per ARC hexamer ring. Upon ATP-binding, the C-terminus of ARC interacts with the alpha-rings of the proteasome core, possibly by binding to the intersubunit pockets.

It participates in protein degradation; proteasomal Pup-dependent pathway. Functionally, ATPase which is responsible for recognizing, binding, unfolding and translocation of pupylated proteins into the bacterial 20S proteasome core particle. May be essential for opening the gate of the 20S proteasome via an interaction with its C-terminus, thereby allowing substrate entry and access to the site of proteolysis. Thus, the C-termini of the proteasomal ATPase may function like a 'key in a lock' to induce gate opening and therefore regulate proteolysis. This chain is Proteasome-associated ATPase, found in Mycobacterium ulcerans (strain Agy99).